Consider the following 908-residue polypeptide: 26S proteasome non-ATPase regulatory subunit 2 (908 aa).

Residue Met-1 is modified to N-acetylmethionine. Residues 1 to 52 are disordered; that stretch reads MEEGGRDKAPVQPQQSPAAAPGGTDEKPSGKERRDAGDKDKEQELSEEDKQL. Low complexity predominate over residues 10–21; sequence PVQPQQSPAAAP. At Ser-16 the chain carries Phosphoserine. A Phosphothreonine modification is found at Thr-24. A compositionally biased stretch (basic and acidic residues) spans 24 to 52; that stretch reads TDEKPSGKERRDAGDKDKEQELSEEDKQL. A phosphoserine mark is found at Ser-29 and Ser-147. Position 194 is a phosphotyrosine (Tyr-194). Ser-361 and Ser-363 each carry phosphoserine. PC repeat units follow at residues 409-442, 443-479, 480-514, 517-551, and 560-589; these read SAAA…YIKS, GALL…TMRL, GSIF…SMEV, VTAL…TELK, and LGLG…PFRS. Position 551 is an N6-acetyllysine (Lys-551). The span at 623-643 shows a compositional bias: basic and acidic residues; that stretch reads KEKEEDKDKKEKKDKDKKEAP. Positions 623-645 are disordered; that stretch reads KEKEEDKDKKEKKDKDKKEAPAD. PC repeat units lie at residues 692–723 and 742–757; these read LALA…EVSY and AAML…KDPN. The tract at residues 708–903 is required for interaction with UBLCP1; it reads DTLSKFSHDA…LEGFVILRKN (196 aa).

The protein belongs to the proteasome subunit S2 family. Component of the 19S proteasome regulatory particle complex. The 26S proteasome consists of a 20S core particle (CP) and two 19S regulatory subunits (RP). The regulatory particle is made of a lid composed of 9 subunits, a base containing 6 ATPases and few additional components including PSMD2. Interacts with RPGRIP1L. Interacts with CRY1 in a KDM8-dependent manner. Interacts (via C-terminus) with phosphatase UBLCP1 (via ubiquitin-like domain); the interaction recruits UBLCP1 to the 19S regulatory particle where it dephosphorylates 19S subunit PSMC2/RPT1 which impairs PSMC2 ATPase activity and disrupts 26S proteasome assembly. In terms of tissue distribution, found in skeletal muscle, liver, heart, brain, kidney, pancreas, lung and placenta.

Component of the 26S proteasome, a multiprotein complex involved in the ATP-dependent degradation of ubiquitinated proteins. This complex plays a key role in the maintenance of protein homeostasis by removing misfolded or damaged proteins, which could impair cellular functions, and by removing proteins whose functions are no longer required. Therefore, the proteasome participates in numerous cellular processes, including cell cycle progression, apoptosis, or DNA damage repair. Its function is as follows. Binds to the intracellular domain of tumor necrosis factor type 1 receptor. The binding domain of TRAP1 and TRAP2 resides outside the death domain of TNFR1. The sequence is that of 26S proteasome non-ATPase regulatory subunit 2 (PSMD2) from Homo sapiens (Human).